Consider the following 525-residue polypeptide: Peptide chain release factor 3 (525 aa).

The tr-type G domain occupies 8-276; the sequence is AMRRTFAIIS…AFVKEAPPPQ (269 aa). Residues 17–24, 85–89, and 139–142 each bind GTP; these read SHPDAGKT, DTPGH, and NKMD.

The protein belongs to the TRAFAC class translation factor GTPase superfamily. Classic translation factor GTPase family. PrfC subfamily.

The protein localises to the cytoplasm. In terms of biological role, increases the formation of ribosomal termination complexes and stimulates activities of RF-1 and RF-2. It binds guanine nucleotides and has strong preference for UGA stop codons. It may interact directly with the ribosome. The stimulation of RF-1 and RF-2 is significantly reduced by GTP and GDP, but not by GMP. The chain is Peptide chain release factor 3 from Coxiella burnetii (strain RSA 331 / Henzerling II).